The following is a 276-amino-acid chain: Large ribosomal subunit protein uL2 (276 aa).

A disordered region spans residues 224–276 (AMNPIDHPHGGGEGKTSGGRNPVTPWGVSTKGKKTRKKNKSSNKYIKRVSDKG). Residues 254–270 (KGKKTRKKNKSSNKYIK) show a composition bias toward basic residues.

Belongs to the universal ribosomal protein uL2 family. In terms of assembly, part of the 50S ribosomal subunit. Forms a bridge to the 30S subunit in the 70S ribosome.

Functionally, one of the primary rRNA binding proteins. Required for association of the 30S and 50S subunits to form the 70S ribosome, for tRNA binding and peptide bond formation. It has been suggested to have peptidyltransferase activity; this is somewhat controversial. Makes several contacts with the 16S rRNA in the 70S ribosome. The chain is Large ribosomal subunit protein uL2 from Ehrlichia ruminantium (strain Gardel).